The chain runs to 261 residues: Thiazole synthase (261 aa).

The active-site Schiff-base intermediate with DXP is Lys-95. 1-deoxy-D-xylulose 5-phosphate is bound by residues Gly-156, Ala-182–Gly-183, and Asn-204–Thr-205.

The protein belongs to the ThiG family. In terms of assembly, homotetramer. Forms heterodimers with either ThiH or ThiS.

It is found in the cytoplasm. The enzyme catalyses [ThiS sulfur-carrier protein]-C-terminal-Gly-aminoethanethioate + 2-iminoacetate + 1-deoxy-D-xylulose 5-phosphate = [ThiS sulfur-carrier protein]-C-terminal Gly-Gly + 2-[(2R,5Z)-2-carboxy-4-methylthiazol-5(2H)-ylidene]ethyl phosphate + 2 H2O + H(+). Its pathway is cofactor biosynthesis; thiamine diphosphate biosynthesis. Catalyzes the rearrangement of 1-deoxy-D-xylulose 5-phosphate (DXP) to produce the thiazole phosphate moiety of thiamine. Sulfur is provided by the thiocarboxylate moiety of the carrier protein ThiS. In vitro, sulfur can be provided by H(2)S. This is Thiazole synthase from Pectobacterium atrosepticum (strain SCRI 1043 / ATCC BAA-672) (Erwinia carotovora subsp. atroseptica).